Reading from the N-terminus, the 497-residue chain is Probable cytosol aminopeptidase (497 aa).

2 residues coordinate Mn(2+): lysine 263 and aspartate 268. Lysine 275 is an active-site residue. Mn(2+) contacts are provided by aspartate 286, aspartate 345, and glutamate 347. Arginine 349 is a catalytic residue.

It belongs to the peptidase M17 family. Requires Mn(2+) as cofactor.

It is found in the cytoplasm. The enzyme catalyses Release of an N-terminal amino acid, Xaa-|-Yaa-, in which Xaa is preferably Leu, but may be other amino acids including Pro although not Arg or Lys, and Yaa may be Pro. Amino acid amides and methyl esters are also readily hydrolyzed, but rates on arylamides are exceedingly low.. It catalyses the reaction Release of an N-terminal amino acid, preferentially leucine, but not glutamic or aspartic acids.. Functionally, presumably involved in the processing and regular turnover of intracellular proteins. Catalyzes the removal of unsubstituted N-terminal amino acids from various peptides. This is Probable cytosol aminopeptidase from Brucella ovis (strain ATCC 25840 / 63/290 / NCTC 10512).